The sequence spans 259 residues: Protein SODIUM POTASSIUM ROOT DEFECTIVE 2 (259 aa).

A disordered region spans residues 141 to 165; sequence PDSITGSVDQDPAKTVEAEAPAGED. Basic and acidic residues predominate over residues 151-165; it reads DPAKTVEAEAPAGED. The region spanning 180–246 is the HMA domain; it reads QQVVVLKVSL…KVKNAQFWTN (67 aa). The a metal cation site is built by Cys-191 and Cys-194.

The sequence is that of Protein SODIUM POTASSIUM ROOT DEFECTIVE 2 from Arabidopsis thaliana (Mouse-ear cress).